Reading from the N-terminus, the 158-residue chain is C-type lectin BiL (158 aa).

The signal sequence occupies residues 1-23 (MGRFIFVSFGLLVVFLSLSGAKG). Intrachain disulfides connect Cys-26-Cys-37, Cys-54-Cys-154, Cys-61-Cys-156, and Cys-129-Cys-146. The C-type lectin domain occupies 33–155 (MNGLCYKIFD…CESKNAFLCQ (123 aa)). Positions 119, 121, 127, 142, and 143 each coordinate Ca(2+). A Galactose-binding motif is present at residues 119 to 121 (QPD).

In terms of assembly, homodimer; disulfide-linked. In terms of tissue distribution, expressed by the venom gland.

Its subcellular location is the secreted. Lectin with a hemagglutinating activity that is inhibited by galactose, lactose and EDTA. Is calcium-dependent. Shows effects on the renal function of isolated perfused rat kidneys by increasing both perfusion pressure (PP) and renal vascular resistance (RVR). In addition, the urinary flow and glomerular filtration rate (GFR) decreases significantly. The changes observed may reflect direct injury to the glomerular and tubular renal cells, and the rise in permeability in the glomerular endothelial cells, may be the effect of interactions of C-type lectin with endothelial cells or due to release of other mediators by mesangial, tubular and endothelial cells. The protein is C-type lectin BiL of Bothrops insularis (Golden lancehead).